The primary structure comprises 445 residues: MSGIPHDHYEPRTGIEKWLHSRLPIVALAYDTIMIPTPRNLNWMWIWGVVLAFCLVLQIVTGIVLAMHYTPHVDLAFASVEHIMRNVNGGFMLRYLHANGASLFFIAVYLHIFRGLYYGSYKAPREVTWIVGMLIYLAMMATAFMGYVLPWGQMSFWGATVITGLFGAIPGIGHSIQTWLLGGPAVDNATLNRFFSLHYLLPFVIAALVAIHIWAFHSTGNNNPTGVEVRRTSKAEAQKDTVPFWPYFIIKDVFALAVVLLVFFAIVGFMPNYLGHPDNYIEANPLSTPAHIVPEWYFLPFYAILRAFTADVWVVQIANFISFGIIDAKFFGVLAMFGAILVMALVPWLDTSPVRSGRYRPMFKIYFWLLAADFVILTWVGAQQTTFPYDWISLIASAYWFAYFLVILPILGAIEKPVAPPATIEEDFNAHYSPATGGTKTVVAE.

The Cytoplasmic portion of the chain corresponds to 2–49; sequence SGIPHDHYEPRTGIEKWLHSRLPIVALAYDTIMIPTPRNLNWMWIWGV. A helical membrane pass occupies residues 50–67; that stretch reads VLAFCLVLQIVTGIVLAM. Over 68–94 the chain is Periplasmic; sequence HYTPHVDLAFASVEHIMRNVNGGFMLR. A helical membrane pass occupies residues 95–113; sequence YLHANGASLFFIAVYLHIF. Heme b-binding residues include His-97 and His-111. At 114–129 the chain is on the cytoplasmic side; it reads RGLYYGSYKAPREVTW. Residues 130 to 149 form a helical membrane-spanning segment; it reads IVGMLIYLAMMATAFMGYVL. Topologically, residues 150–193 are periplasmic; it reads PWGQMSFWGATVITGLFGAIPGIGHSIQTWLLGGPAVDNATLNR. The helical transmembrane segment at 194–216 threads the bilayer; that stretch reads FFSLHYLLPFVIAALVAIHIWAF. Residues His-198 and His-212 each coordinate heme b. Over 217-252 the chain is Cytoplasmic; sequence HSTGNNNPTGVEVRRTSKAEAQKDTVPFWPYFIIKD. A helical membrane pass occupies residues 253–270; that stretch reads VFALAVVLLVFFAIVGFM. Residues 271–329 are Periplasmic-facing; it reads PNYLGHPDNYIEANPLSTPAHIVPEWYFLPFYAILRAFTADVWVVQIANFISFGIIDAK. Residues 330-346 form a helical membrane-spanning segment; it reads FFGVLAMFGAILVMALV. The Cytoplasmic segment spans residues 347–364; the sequence is PWLDTSPVRSGRYRPMFK. The chain crosses the membrane as a helical span at residues 365 to 382; it reads IYFWLLAADFVILTWVGA. The Periplasmic segment spans residues 383 to 388; sequence QQTTFP. Residues 389-408 traverse the membrane as a helical segment; it reads YDWISLIASAYWFAYFLVIL. Topologically, residues 409–445 are cytoplasmic; the sequence is PILGAIEKPVAPPATIEEDFNAHYSPATGGTKTVVAE.

This sequence belongs to the cytochrome b family. The main subunits of complex b-c1 are: cytochrome b, cytochrome c1 and the Rieske protein. The cofactor is heme b.

The protein localises to the cell membrane. Component of the ubiquinol-cytochrome c reductase complex (complex III or cytochrome b-c1 complex), which is a respiratory chain that generates an electrochemical potential coupled to ATP synthesis. The sequence is that of Cytochrome b (petB) from Cereibacter sphaeroides (Rhodobacter sphaeroides).